The primary structure comprises 142 residues: Large ribosomal subunit protein uL13 (142 aa).

This sequence belongs to the universal ribosomal protein uL13 family. As to quaternary structure, part of the 50S ribosomal subunit.

This protein is one of the early assembly proteins of the 50S ribosomal subunit, although it is not seen to bind rRNA by itself. It is important during the early stages of 50S assembly. The protein is Large ribosomal subunit protein uL13 of Psychrobacter sp. (strain PRwf-1).